We begin with the raw amino-acid sequence, 121 residues long: Large ribosomal subunit protein bL21 (121 aa).

It belongs to the bacterial ribosomal protein bL21 family. Part of the 50S ribosomal subunit. Contacts protein L20.

In terms of biological role, this protein binds to 23S rRNA in the presence of protein L20. The chain is Large ribosomal subunit protein bL21 from Gloeobacter violaceus (strain ATCC 29082 / PCC 7421).